The primary structure comprises 198 residues: Pyridoxine/pyridoxamine 5'-phosphate oxidase 2 (198 aa).

Residues Arg-42, 59–60 (NT), Lys-66, and 121–122 (RS) contribute to the FMN site.

Belongs to the pyridoxamine 5'-phosphate oxidase family. Homodimer. Requires FMN as cofactor.

The enzyme catalyses pyridoxamine 5'-phosphate + O2 + H2O = pyridoxal 5'-phosphate + H2O2 + NH4(+). It carries out the reaction pyridoxine 5'-phosphate + O2 = pyridoxal 5'-phosphate + H2O2. The protein operates within cofactor metabolism; pyridoxal 5'-phosphate salvage; pyridoxal 5'-phosphate from pyridoxamine 5'-phosphate: step 1/1. It participates in cofactor metabolism; pyridoxal 5'-phosphate salvage; pyridoxal 5'-phosphate from pyridoxine 5'-phosphate: step 1/1. In terms of biological role, catalyzes the oxidation of either pyridoxine 5'-phosphate (PNP) or pyridoxamine 5'-phosphate (PMP) into pyridoxal 5'-phosphate (PLP). Has an in vitro catalytic efficiency for PNP approximately 300-fold lower than that of PPOX1. The protein is Pyridoxine/pyridoxamine 5'-phosphate oxidase 2 (PPOX2) of Arabidopsis thaliana (Mouse-ear cress).